We begin with the raw amino-acid sequence, 369 residues long: Putative FAD-dependent monooxygenase YetM (369 aa).

Residues 1–32 (MKHMLIAGGGIGGLSAAISLRKAGFSVTLCEA) form the signal peptide. Residues Gly12, 31-32 (EA), Val126, and Asp285 each bind FAD.

The cofactor is FAD.

The protein is Putative FAD-dependent monooxygenase YetM (yetM) of Bacillus subtilis (strain 168).